The sequence spans 305 residues: Methionyl-tRNA formyltransferase (305 aa).

111–114 (SLLP) provides a ligand contact to (6S)-5,6,7,8-tetrahydrofolate.

It belongs to the Fmt family.

It carries out the reaction L-methionyl-tRNA(fMet) + (6R)-10-formyltetrahydrofolate = N-formyl-L-methionyl-tRNA(fMet) + (6S)-5,6,7,8-tetrahydrofolate + H(+). Its function is as follows. Attaches a formyl group to the free amino group of methionyl-tRNA(fMet). The formyl group appears to play a dual role in the initiator identity of N-formylmethionyl-tRNA by promoting its recognition by IF2 and preventing the misappropriation of this tRNA by the elongation apparatus. The chain is Methionyl-tRNA formyltransferase from Helicobacter pylori (strain J99 / ATCC 700824) (Campylobacter pylori J99).